We begin with the raw amino-acid sequence, 73 residues long: Beta-1 adrenergic receptor (73 aa).

A helical transmembrane segment spans residues 1–12 (ISALVSFLPILM). Residues 13-38 (HWWRAENDEARRCYNDPKCCDFVTNR) are Extracellular-facing. Residues C25 and C31 are joined by a disulfide bond. Residues 39 to 64 (AYAIASSVVSFYVPLCIMAFVYLRVF) form a helical membrane-spanning segment. S44 serves as a coordination point for cyanopindolol. The Cytoplasmic portion of the chain corresponds to 65–73 (REAQKQVKK).

This sequence belongs to the G-protein coupled receptor 1 family. Adrenergic receptor subfamily. ADRB1 sub-subfamily. As to quaternary structure, interacts (via C-terminus PDZ motif) with RAPGEF2; the interaction is direct. Interacts with GOPC, MAGI3 and DLG4. Post-translationally, homologous desensitization of the receptor is mediated by its phosphorylation by beta-adrenergic receptor kinase.

It is found in the cell membrane. The protein resides in the early endosome. Functionally, beta-adrenergic receptors mediate the catecholamine-induced activation of adenylate cyclase through the action of G proteins. This receptor binds epinephrine and norepinephrine with approximately equal affinity. Mediates Ras activation through G(s)-alpha- and cAMP-mediated signaling. In dorsal pons neurons, involved in the regulation of sleep/wake behaviors. This is Beta-1 adrenergic receptor (ADRB1) from Meriones unguiculatus (Mongolian jird).